A 186-amino-acid chain; its full sequence is Ribosome-recycling factor (186 aa).

It belongs to the RRF family.

The protein localises to the cytoplasm. Functionally, responsible for the release of ribosomes from messenger RNA at the termination of protein biosynthesis. May increase the efficiency of translation by recycling ribosomes from one round of translation to another. This chain is Ribosome-recycling factor, found in Chlorobium chlorochromatii (strain CaD3).